Consider the following 105-residue polypeptide: Small ribosomal subunit protein uS10 (105 aa).

It belongs to the universal ribosomal protein uS10 family. Part of the 30S ribosomal subunit.

Functionally, involved in the binding of tRNA to the ribosomes. This chain is Small ribosomal subunit protein uS10, found in Trichodesmium erythraeum (strain IMS101).